Consider the following 99-residue polypeptide: DASH complex subunit DAD1 (99 aa).

The segment at 69 to 99 (GMNHQTRENTRDENNKISSSDTEDENNNNKI) is disordered. Residues 73–83 (QTRENTRDENN) are compositionally biased toward basic and acidic residues. Residues 89–99 (DTEDENNNNKI) are compositionally biased toward acidic residues.

The protein belongs to the DASH complex DAD1 family. As to quaternary structure, component of the DASH complex consisting of ASK1, DAD1, DAD2, DAD3, DAD4, DAM1, DUO1, HSK3, SPC19 and SPC34, with a stoichiometry of one copy of each subunit per complex. Multiple DASH complexes oligomerize to form a ring that encircles spindle microtubules and organizes the rod-like NDC80 complexes of the outer kinetochore. DASH complex oligomerization strengthens microtubule attachments. On cytoplasmic microtubules, DASH complexes appear to form patches instead of rings.

Its subcellular location is the chromosome. The protein localises to the centromere. It localises to the kinetochore. It is found in the cytoplasm. The protein resides in the cytoskeleton. Its subcellular location is the spindle. The protein localises to the nucleus. Functionally, component of the DASH complex that connects microtubules with kinetochores and couples microtubule depolymerisation to chromosome movement; it is involved in retrieving kinetochores to the spindle poles before their re-orientation on the spindle in early mitosis and allows microtubule depolymerization to pull chromosomes apart and resist detachment during anaphase. Kinetochores, consisting of a centromere-associated inner segment and a microtubule-contacting outer segment, play a crucial role in chromosome segregation by mediating the physical connection between centromeric DNA and microtubules. Kinetochores also serve as an input point for the spindle assembly checkpoint, which delays anaphase until all chromosomes have bioriented on the mitotic spindle. The chain is DASH complex subunit DAD1 from Candida albicans (strain SC5314 / ATCC MYA-2876) (Yeast).